We begin with the raw amino-acid sequence, 376 residues long: Glutamate 5-kinase (376 aa).

An ATP-binding site is contributed by Lys15. Ser56, Asp143, and Asn155 together coordinate substrate. 175–176 (SD) contributes to the ATP binding site. A PUA domain is found at 281 to 358 (KGTLTIDAGA…PDVMSILGVS (78 aa)).

It belongs to the glutamate 5-kinase family.

It is found in the cytoplasm. It catalyses the reaction L-glutamate + ATP = L-glutamyl 5-phosphate + ADP. The protein operates within amino-acid biosynthesis; L-proline biosynthesis; L-glutamate 5-semialdehyde from L-glutamate: step 1/2. Its function is as follows. Catalyzes the transfer of a phosphate group to glutamate to form L-glutamate 5-phosphate. This chain is Glutamate 5-kinase, found in Rhodopseudomonas palustris (strain HaA2).